A 372-amino-acid chain; its full sequence is Ca(2+)/H(+) antiporter (372 aa).

The next 11 helical transmembrane spans lie at isoleucine 7 to glycine 27, threonine 29 to alanine 49, glycine 62 to leucine 82, leucine 94 to glycine 114, methionine 134 to valine 154, leucine 162 to methionine 182, leucine 222 to valine 242, serine 251 to alanine 271, glycine 294 to isoleucine 314, leucine 320 to isoleucine 340, and isoleucine 352 to valine 372.

This sequence belongs to the Ca(2+):cation antiporter (CaCA) (TC 2.A.19) family. Cation/proton exchanger (CAX) subfamily.

The protein localises to the cell inner membrane. Its function is as follows. Ca(+)/H(+) antiporter that extrudes calcium in exchange for external protons. Plays an important role in salt tolerance. Does not transport sodium or lithium. The polypeptide is Ca(2+)/H(+) antiporter (Synechocystis sp. (strain ATCC 27184 / PCC 6803 / Kazusa)).